The following is a 141-amino-acid chain: Nucleoside diphosphate kinase (141 aa).

ATP-binding residues include lysine 11, phenylalanine 59, arginine 87, threonine 93, arginine 104, and asparagine 114. Histidine 117 functions as the Pros-phosphohistidine intermediate in the catalytic mechanism.

It belongs to the NDK family. In terms of assembly, homotetramer. Requires Mg(2+) as cofactor.

It localises to the cytoplasm. The enzyme catalyses a 2'-deoxyribonucleoside 5'-diphosphate + ATP = a 2'-deoxyribonucleoside 5'-triphosphate + ADP. It carries out the reaction a ribonucleoside 5'-diphosphate + ATP = a ribonucleoside 5'-triphosphate + ADP. Functionally, major role in the synthesis of nucleoside triphosphates other than ATP. The ATP gamma phosphate is transferred to the NDP beta phosphate via a ping-pong mechanism, using a phosphorylated active-site intermediate. This is Nucleoside diphosphate kinase from Laribacter hongkongensis (strain HLHK9).